Reading from the N-terminus, the 477-residue chain is Lactate utilization protein B (477 aa).

2 4Fe-4S ferredoxin-type domains span residues 304 to 334 (GTEF…GHSY) and 353 to 382 (YDDY…LHEL). [4Fe-4S] cluster is bound by residues cysteine 313, cysteine 316, cysteine 319, cysteine 323, cysteine 366, cysteine 369, and cysteine 373. Residues 433–477 (KEDGKITKGPGPLKQWTQIRDFPAPNKSRFRDWFEDRRKEKGEDK) form a disordered region. Residues 461-477 (RFRDWFEDRRKEKGEDK) are compositionally biased toward basic and acidic residues.

This sequence belongs to the LutB/YkgF family.

Its function is as follows. Is involved in L-lactate degradation and allows cells to grow with lactate as the sole carbon source. Has probably a role as an electron transporter during oxidation of L-lactate. The protein is Lactate utilization protein B of Bacillus licheniformis (strain ATCC 14580 / DSM 13 / JCM 2505 / CCUG 7422 / NBRC 12200 / NCIMB 9375 / NCTC 10341 / NRRL NRS-1264 / Gibson 46).